Here is a 57-residue protein sequence, read N- to C-terminus: uncharacterized protein (57 aa).

Residues 1–20 (MKKLALILFMGTLVSFYADA) form the signal peptide.

This is an uncharacterized protein from Escherichia coli (strain K12).